We begin with the raw amino-acid sequence, 301 residues long: Beta-1,3-galactosyltransferase 5 (301 aa).

Over M1–R7 the chain is Cytoplasmic. Residues L8–L28 traverse the membrane as a helical; Signal-anchor for type II membrane protein segment. Residues N29–N301 lie on the Lumenal side of the membrane. N-linked (GlcNAc...) asparagine glycosylation is found at N130, N174, and N231.

It belongs to the glycosyltransferase 31 family.

The protein localises to the golgi apparatus membrane. The enzyme catalyses a globoside Gb4Cer (d18:1(4E)) + UDP-alpha-D-galactose = a globoside GalGb4Cer (d18:1(4E)) + UDP + H(+). Its pathway is protein modification; protein glycosylation. Functionally, catalyzes the transfer of Gal to GlcNAc-based acceptors with a preference for the core3 O-linked glycan GlcNAc(beta1,3)GalNAc structure. Can use glycolipid LC3Cer as an efficient acceptor. This Pan paniscus (Pygmy chimpanzee) protein is Beta-1,3-galactosyltransferase 5 (B3GALT5).